A 226-amino-acid polypeptide reads, in one-letter code: Transcriptional regulatory protein CitT (226 aa).

A Response regulatory domain is found at 3-119; that stretch reads HIAIAEDDFR…KFRQVLLQYK (117 aa). D54 is modified (4-aspartylphosphate). Residues 178-197 constitute a DNA-binding region (H-T-H motif); that stretch reads AEELGEKMGASRTTARRYAE.

Phosphorylated by CitS.

It is found in the cytoplasm. In terms of biological role, member of the two-component regulatory system CitT/CitS. Regulates the expression of the citM-yflN operon. Phosphorylated CitT binds to the citM promoter to activate the transcription of the citM-yflN operon. The sequence is that of Transcriptional regulatory protein CitT (citT) from Bacillus subtilis (strain 168).